We begin with the raw amino-acid sequence, 550 residues long: Leucine-rich repeat, immunoglobulin-like domain and transmembrane domain-containing protein 2 (550 aa).

The signal sequence occupies residues 1 to 19 (MASVFHYFLLVLVFLDTHA). Residues 23–54 (FCLPGCTCSEESFGRTLQCTSVSLGKIPGNLS) enclose the LRRNT domain. N-linked (GlcNAc...) asparagine glycosylation occurs at Asn52. LRR repeat units follow at residues 80-103 (TLEY…EHLP), 104-125 (ELRE…AFRA), 128-149 (LLRV…ALQF), and 152-173 (SLTY…VFLN). One can recognise an LRRCT domain in the interval 200-252 (NPWVCDCRLRGLVQFVKSITLPVILVNSYLICQGPLSKAGQLFHETELSACMK). An Ig-like domain is found at 253–341 (PQISTPSANI…SIGKSNLVIS (89 aa)). Cys274 and Cys327 form a disulfide bridge. A Fibronectin type-III domain is found at 361 to 451 (EGNAYIDLRV…QGQCVAFVTG (91 aa)). A helical membrane pass occupies residues 466-486 (VTVVLCVVLLAVPVGAYAWAA). Residues 508–550 (SCTPAAPQSKDGSFREHPAVCDDGEGHIDTEGDKEKGGTEDNS) are disordered. Over residues 519 to 550 (GSFREHPAVCDDGEGHIDTEGDKEKGGTEDNS) the composition is skewed to basic and acidic residues.

As to quaternary structure, interacts with LRIT1; may form a heterodimer with LRIT1.

The protein resides in the membrane. The protein is Leucine-rich repeat, immunoglobulin-like domain and transmembrane domain-containing protein 2 (LRIT2) of Homo sapiens (Human).